The sequence spans 270 residues: MPELPEVETTRRGLQVHLVGRTLQRVVVRQRQLRYPVPARVEAAVVGEEVVALERRAKYLLIRLGGGAWLLLHLGMSGSLRLVAETDAPGRHDHVDLVLNDGRAVRLTDPRRFGCLLLGDGDPQDHRLLRRLGPEPLGSAFDGAVLHRAARGRRVAVKALLMDATVVVGVGNIYANEALFRAGIRPDRAAGRIARARYDRLAGAVRAVLEAALAAGGTTLRDFTDGSGEPGYFAVNLSVYGASVCPVCGGALRQIRLAQRGTWFCPRCQR.

The Schiff-base intermediate with DNA role is filled by Pro2. The Proton donor role is filled by Glu3. The Proton donor; for beta-elimination activity role is filled by Lys58. The DNA site is built by His92, Arg111, and Arg153. The FPG-type zinc-finger motif lies at 238–270; it reads SVYGASVCPVCGGALRQIRLAQRGTWFCPRCQR. The active-site Proton donor; for delta-elimination activity is the Arg260.

This sequence belongs to the FPG family. In terms of assembly, monomer. Requires Zn(2+) as cofactor.

The enzyme catalyses Hydrolysis of DNA containing ring-opened 7-methylguanine residues, releasing 2,6-diamino-4-hydroxy-5-(N-methyl)formamidopyrimidine.. It carries out the reaction 2'-deoxyribonucleotide-(2'-deoxyribose 5'-phosphate)-2'-deoxyribonucleotide-DNA = a 3'-end 2'-deoxyribonucleotide-(2,3-dehydro-2,3-deoxyribose 5'-phosphate)-DNA + a 5'-end 5'-phospho-2'-deoxyribonucleoside-DNA + H(+). Its function is as follows. Involved in base excision repair of DNA damaged by oxidation or by mutagenic agents. Acts as a DNA glycosylase that recognizes and removes damaged bases. Has a preference for oxidized purines, such as 7,8-dihydro-8-oxoguanine (8-oxoG). Has AP (apurinic/apyrimidinic) lyase activity and introduces nicks in the DNA strand. Cleaves the DNA backbone by beta-delta elimination to generate a single-strand break at the site of the removed base with both 3'- and 5'-phosphates. This Halorhodospira halophila (strain DSM 244 / SL1) (Ectothiorhodospira halophila (strain DSM 244 / SL1)) protein is Formamidopyrimidine-DNA glycosylase.